A 235-amino-acid polypeptide reads, in one-letter code: MIPRRSSDITIKTRSDVLPFSGASSRWLQRYAPALLAVALIIAMSISLAWQAAGWLRLQRSPVAVAASPVSHESIRSDPTRLARLFGTSAQDPNAPPPATNLDLVLKGSFVQSDPKLSSAIIQRQGDKPHRYAVGGEISDGVKLHAVYRDRVELQRGGRLESLPFPHRSGGLLASADDITSENDSIEQLQSLQDENAAALRERLDALRQQMEATPIAEPAEEDSSEPTTTPTESD.

At 1 to 34 (MIPRRSSDITIKTRSDVLPFSGASSRWLQRYAPA) the chain is on the cytoplasmic side. The chain crosses the membrane as a helical; Signal-anchor for type II membrane protein span at residues 35 to 55 (LLAVALIIAMSISLAWQAAGW). Residues 56 to 235 (LRLQRSPVAV…EPTTTPTESD (180 aa)) lie on the Periplasmic side of the membrane. Residues 205–235 (DALRQQMEATPIAEPAEEDSSEPTTTPTESD) are disordered. Residues 226–235 (EPTTTPTESD) are compositionally biased toward low complexity.

The protein localises to the cell inner membrane. Its function is as follows. Involved in a type II secretion system (T2SS, formerly general secretion pathway, GSP) for the export of proteins. Required for the translocation of a variety of enzymes across the outer membrane. In Pseudomonas aeruginosa (strain ATCC 15692 / DSM 22644 / CIP 104116 / JCM 14847 / LMG 12228 / 1C / PRS 101 / PAO1), this protein is Type II secretion system protein N (xcpP).